Reading from the N-terminus, the 159-residue chain is Prs ADP-ribosylating antitoxin (159 aa).

A sufficient to neutralize toxin region spans residues 99–159; sequence EDMVEESGET…LAQIQSGAFA (61 aa).

It belongs to the MbcA/ParS/Xre antitoxin family. Forms heterotetrameric ParS(2)-ParT(2) complexes. The 2 antitoxin fragments do not make contact in the crystal structure.

Antitoxin component of a type II toxin-antitoxin (TA) system. Neutralizes the bacteriostatic effect of cognate toxin ParT by inserting into its active site. In Sphingobium sp. (strain YBL2), this protein is Prs ADP-ribosylating antitoxin.